A 127-amino-acid polypeptide reads, in one-letter code: Glycine cleavage system H protein (127 aa).

Residues 24-105 (TVKVGISDHA…PYEAWLFAVR (82 aa)) enclose the Lipoyl-binding domain. An N6-lipoyllysine modification is found at K65.

It belongs to the GcvH family. As to quaternary structure, the glycine cleavage system is composed of four proteins: P, T, L and H. (R)-lipoate serves as cofactor.

In terms of biological role, the glycine cleavage system catalyzes the degradation of glycine. The H protein shuttles the methylamine group of glycine from the P protein to the T protein. This is Glycine cleavage system H protein from Methylococcus capsulatus (strain ATCC 33009 / NCIMB 11132 / Bath).